The following is a 536-amino-acid chain: Phosphoenolpyruvate carboxykinase (ATP) (536 aa).

Substrate-binding residues include Arg61, Tyr195, and Lys201. Residues Lys201, His220, and 236–244 (GLSGTGKTT) contribute to the ATP site. Residues Lys201 and His220 each coordinate Mn(2+). Asp257 serves as a coordination point for Mn(2+). ATP contacts are provided by Glu285, Arg322, and Thr447. Residue Arg322 coordinates substrate.

Belongs to the phosphoenolpyruvate carboxykinase (ATP) family. Mn(2+) is required as a cofactor.

It is found in the cytoplasm. The catalysed reaction is oxaloacetate + ATP = phosphoenolpyruvate + ADP + CO2. It participates in carbohydrate biosynthesis; gluconeogenesis. Involved in the gluconeogenesis. Catalyzes the conversion of oxaloacetate (OAA) to phosphoenolpyruvate (PEP) through direct phosphoryl transfer between the nucleoside triphosphate and OAA. The sequence is that of Phosphoenolpyruvate carboxykinase (ATP) from Mesorhizobium japonicum (strain LMG 29417 / CECT 9101 / MAFF 303099) (Mesorhizobium loti (strain MAFF 303099)).